We begin with the raw amino-acid sequence, 376 residues long: Protein-tyrosine sulfotransferase 2 (376 aa).

Residues 1–8 (MRLSVRKV) lie on the Cytoplasmic side of the membrane. Residues 9-25 (LLAAGCALALVLAVQLG) form a helical; Signal-anchor for type II membrane protein membrane-spanning segment. Residues 26-376 (QQVLECRAVL…NSTSPHLGSS (351 aa)) are Lumenal-facing. 77 to 81 (RSGTT) contributes to the 3'-phosphoadenylyl sulfate binding site. A disulfide bridge connects residues Cys95 and Cys155. Residue Glu98 is the Proton donor/acceptor of the active site. The segment at 100–104 (RIIPR) is interaction with peptide substrate. Residues Arg182, Ser190, and Arg194 each coordinate 3'-phosphoadenylyl sulfate. A disulfide bond links Cys224 and Cys232. Residues Tyr237, 284–293 (STDQVIKPVN), and Lys299 contribute to the 3'-phosphoadenylyl sulfate site. Asn342 and Asn367 each carry an N-linked (GlcNAc...) asparagine glycan.

The protein belongs to the protein sulfotransferase family. Homodimer. Can also form heterodimers with TPST1. Post-translationally, N-glycosylated. In terms of tissue distribution, widely expressed.

The protein resides in the golgi apparatus membrane. The enzyme catalyses L-tyrosyl-[protein] + 3'-phosphoadenylyl sulfate = O-sulfo-L-tyrosine-[protein] + adenosine 3',5'-bisphosphate + H(+). In terms of biological role, catalyzes the O-sulfation of tyrosine residues within acidic motifs of polypeptides, using 3'-phosphoadenylyl sulfate (PAPS) as cosubstrate. The polypeptide is Protein-tyrosine sulfotransferase 2 (Tpst2) (Mus musculus (Mouse)).